Reading from the N-terminus, the 364-residue chain is MPEVQRMTLTQFLIEERRRYPDASGGFNGLILNVAMACKEIARAVAFGALGGLHGKASNQAGEAGAVNVQGEIQQKLDVLSNTTFLRVNEWGGYLAGMASEEMEAPYQIPDHYPRGKYLLVFDPLDGSSNIDVNVSVGSIFSVLRAPEGASAVTEQDFLQPGSAQVAAGYALYGPTTMLVLTVGNGVNGFTLDPNLGEFFLTHPNLQVPADTQEFAINASNSRFWEAPVQRYIAECMAGKSGPRGKDFNMRWIASMVAEAHRILMRGGVFMYPRDSKDPAKPGRLRLLYEANPIAFLMEQAGGRASTGRQTLMSVAPGALHQRIGVIFGSRNEVERIEGYHTDQTDPDLPSPLFNERSLFRASA.

4 residues coordinate Mg(2+): E101, D123, L125, and D126. Residues 126–129 and N218 each bind substrate; that span reads DGSS. E290 contacts Mg(2+).

This sequence belongs to the FBPase class 1 family. As to quaternary structure, homotetramer. Mg(2+) is required as a cofactor.

The protein resides in the cytoplasm. The catalysed reaction is beta-D-fructose 1,6-bisphosphate + H2O = beta-D-fructose 6-phosphate + phosphate. The protein operates within carbohydrate biosynthesis; gluconeogenesis. This chain is Fructose-1,6-bisphosphatase class 1 2, found in Cupriavidus necator (strain ATCC 17699 / DSM 428 / KCTC 22496 / NCIMB 10442 / H16 / Stanier 337) (Ralstonia eutropha).